The chain runs to 488 residues: Annexin A7 (488 aa).

The span at 1–18 (MSYPGYPPTGYPPFPGYP) shows a compositional bias: pro residues. 2 disordered regions span residues 1–49 (MSYP…YPQV) and 71–143 (GYPG…PTYP). Residues 1–143 (MSYPGYPPTG…QYPGGQPTYP (143 aa)) form a repeat-rich region region. The 3 X 5 AA tandem repeats of G-Y-P-P-X stretch occupies residues 5–20 (GYPPTGYPPFPGYPPA). The segment covering 89–102 (PGQGFGVPPGGAGF) has biased composition (gly residues). Annexin repeat units follow at residues 185–256 (FDAI…ALFM), 257–328 (PPTY…SMCQ), 340–412 (QMAQ…TILQ), and 416–487 (NRPA…AIVG). K233 is subject to N6-acetyllysine.

Belongs to the annexin family. Interacts with PDCD6. In terms of tissue distribution, isoform 1 is expressed in brain, heart and skeletal muscle. Isoform 2 is more abundant in liver, lung, kidney, spleen, fibroblasts and placenta.

In terms of biological role, calcium/phospholipid-binding protein which promotes membrane fusion and is involved in exocytosis. The polypeptide is Annexin A7 (ANXA7) (Homo sapiens (Human)).